The chain runs to 128 residues: Con-Ins F1 (128 aa).

An N-terminal signal peptide occupies residues 1-24 (MTTSSYFLLVTLGLLLYVCRSSFG). 4 cysteine pairs are disulfide-bonded: Cys-29-Cys-104, Cys-41-Cys-107, Cys-53-Cys-120, and Cys-106-Cys-111. Residues 59–89 (LQGGTGKKRGRASPLRKRRAFLSMLKARAKR) constitute a propeptide, c peptide. 4-carboxyglutamate; partial is present on Glu-115. Ser-127 is subject to Serine amide.

This sequence belongs to the insulin family. Heterodimer of A and B chains; disulfide-linked. Expressed by the venom gland.

The protein localises to the secreted. Functionally, this venom insulin facilitates prey capture by rapidly inducing hypoglycemic shock. Intraperitoneal injection of this peptide into zebrafish lowers blood glucose with the same potency than human insulin. In vivo, when applied to water, this peptide reduces overall locomotor activity of zebrafish larvae, observed as a significant decrease in the percentage of time spent swimming and movement frequency. In Conus floridulus (Cone snail), this protein is Con-Ins F1.